Reading from the N-terminus, the 232-residue chain is 5'-methylthioadenosine/S-adenosylhomocysteine nucleosidase (232 aa).

Glu-12 functions as the Proton acceptor in the catalytic mechanism. Substrate-binding positions include Gly-78, Val-152, and 173–174 (ME). Residue Asp-197 is the Proton donor of the active site.

Belongs to the PNP/UDP phosphorylase family. MtnN subfamily. As to quaternary structure, homodimer.

The enzyme catalyses S-adenosyl-L-homocysteine + H2O = S-(5-deoxy-D-ribos-5-yl)-L-homocysteine + adenine. It carries out the reaction S-methyl-5'-thioadenosine + H2O = 5-(methylsulfanyl)-D-ribose + adenine. It catalyses the reaction 5'-deoxyadenosine + H2O = 5-deoxy-D-ribose + adenine. It participates in amino-acid biosynthesis; L-methionine biosynthesis via salvage pathway; S-methyl-5-thio-alpha-D-ribose 1-phosphate from S-methyl-5'-thioadenosine (hydrolase route): step 1/2. Functionally, catalyzes the irreversible cleavage of the glycosidic bond in both 5'-methylthioadenosine (MTA) and S-adenosylhomocysteine (SAH/AdoHcy) to adenine and the corresponding thioribose, 5'-methylthioribose and S-ribosylhomocysteine, respectively. Also cleaves 5'-deoxyadenosine, a toxic by-product of radical S-adenosylmethionine (SAM) enzymes, into 5-deoxyribose and adenine. Thus, is required for in vivo function of the radical SAM enzymes biotin synthase and lipoic acid synthase, that are inhibited by 5'-deoxyadenosine accumulation. This is 5'-methylthioadenosine/S-adenosylhomocysteine nucleosidase from Buchnera aphidicola subsp. Acyrthosiphon pisum (strain APS) (Acyrthosiphon pisum symbiotic bacterium).